The following is a 265-amino-acid chain: Hydroxyethylthiazole kinase (265 aa).

Met-43 contacts substrate. Lys-118 and Thr-165 together coordinate ATP. Gly-192 contributes to the substrate binding site.

This sequence belongs to the Thz kinase family. Mg(2+) is required as a cofactor.

The enzyme catalyses 5-(2-hydroxyethyl)-4-methylthiazole + ATP = 4-methyl-5-(2-phosphooxyethyl)-thiazole + ADP + H(+). Its pathway is cofactor biosynthesis; thiamine diphosphate biosynthesis; 4-methyl-5-(2-phosphoethyl)-thiazole from 5-(2-hydroxyethyl)-4-methylthiazole: step 1/1. Its function is as follows. Catalyzes the phosphorylation of the hydroxyl group of 4-methyl-5-beta-hydroxyethylthiazole (THZ). This chain is Hydroxyethylthiazole kinase, found in Pyrococcus horikoshii (strain ATCC 700860 / DSM 12428 / JCM 9974 / NBRC 100139 / OT-3).